A 340-amino-acid chain; its full sequence is Fructose-1,6-bisphosphatase class 1 (340 aa).

Mg(2+)-binding residues include Glu-107, Asp-126, Leu-128, and Asp-129. Asn-215 provides a ligand contact to substrate. Residue Glu-287 participates in Mg(2+) binding.

The protein belongs to the FBPase class 1 family. In terms of assembly, homotetramer. Mg(2+) serves as cofactor.

It is found in the cytoplasm. It carries out the reaction beta-D-fructose 1,6-bisphosphate + H2O = beta-D-fructose 6-phosphate + phosphate. The protein operates within carbohydrate biosynthesis; gluconeogenesis. The chain is Fructose-1,6-bisphosphatase class 1 from Brucella suis (strain ATCC 23445 / NCTC 10510).